Consider the following 417-residue polypeptide: 3-oxoacyl-[acyl-carrier-protein] synthase 2 (417 aa).

Residues Phe10 to Arg416 form the Ketosynthase family 3 (KS3) domain. Residues Cys170, His311, and His346 each act as for beta-ketoacyl synthase activity in the active site.

This sequence belongs to the thiolase-like superfamily. Beta-ketoacyl-ACP synthases family.

It is found in the cytoplasm. The enzyme catalyses an ultra-long-chain di-unsaturated fatty acyl-[ACP] + malonyl-[ACP] + H(+) = a 3-oxo-ultra-long-chain di-unsaturated fatty acyl-[ACP] + holo-[ACP] + CO2. It functions in the pathway lipid metabolism; mycolic acid biosynthesis. Part of the mycobacterial fatty acid elongation system FAS-II, which is involved in mycolic acid biosynthesis. Catalyzes the elongation of long chain acyl-ACP substrates by the addition of two carbons from malonyl-ACP to an acyl acceptor. Involved in extension of the mycolate chains to full lengths and produces longer chain multiunsaturated hydrocarbons averaging 54 carbons in length. This is 3-oxoacyl-[acyl-carrier-protein] synthase 2 (kasB) from Mycobacterium bovis (strain ATCC BAA-935 / AF2122/97).